The chain runs to 215 residues: Guanylate kinase (215 aa).

The Guanylate kinase-like domain maps to 6-185 (GAILVLSGPS…SEKLLLSIAR (180 aa)). Position 13-20 (13-20 (GPSGSGKS)) interacts with ATP.

Belongs to the guanylate kinase family.

It is found in the cytoplasm. It carries out the reaction GMP + ATP = GDP + ADP. In terms of biological role, essential for recycling GMP and indirectly, cGMP. This is Guanylate kinase from Wolinella succinogenes (strain ATCC 29543 / DSM 1740 / CCUG 13145 / JCM 31913 / LMG 7466 / NCTC 11488 / FDC 602W) (Vibrio succinogenes).